The chain runs to 157 residues: Heat shock protein beta-9 (157 aa).

Over residues 1-17 (MQRVGSSLPSGSQSASQ) the composition is skewed to low complexity. Disordered regions lie at residues 1-20 (MQRVGSSLPSGSQSASQCPS) and 136-157 (PPSEAQTGPASRFRSRGSKKLA). The 114-residue stretch at 35-148 (QRLTEDAAAV…EAQTGPASRF (114 aa)) folds into the sHSP domain. Residues 148–157 (FRSRGSKKLA) show a composition bias toward basic residues.

Belongs to the small heat shock protein (HSP20) family.

Its subcellular location is the cytoplasm. The protein resides in the nucleus. This is Heat shock protein beta-9 (HSPB9) from Bos taurus (Bovine).